The primary structure comprises 501 residues: Lycopene beta cyclase, chloroplastic (501 aa).

Residues 1–48 (MDTLLKTPNKLDFFIPQFHGFERLCSNNPYHSRVRLGVKKRAIKIVSS) constitute a chloroplast transit peptide. Valine 49 carries the post-translational modification N-acetylvaline. 85–113 (LAIVGGGPAGLAVAQQVSEAGLSVCSIDP) is a binding site for NAD(+).

It belongs to the lycopene cyclase family.

The protein resides in the plastid. The protein localises to the chloroplast. The catalysed reaction is a carotenoid psi-end group = a carotenoid beta-end derivative. It functions in the pathway carotenoid biosynthesis; beta-carotene biosynthesis. Its pathway is carotenoid biosynthesis; beta-zeacarotene biosynthesis. Involved in carotenoid biosynthesis. Catalyzes the double cyclization reaction which converts lycopene to beta-carotene and neurosporene to beta-zeacarotene. Major lycopene beta-cyclase that does not seem to be involved in neoxanthin synthesis. Involved in salt tolerance improvement by increasing synthesis of carotenoids, which impairs reactive oxygen species (ROS) and protects the photosynthetic system under salt stress. The chain is Lycopene beta cyclase, chloroplastic from Arabidopsis thaliana (Mouse-ear cress).